Here is a 223-residue protein sequence, read N- to C-terminus: MNQDQLKQAVAQAAVDHILPHLDSKSIVGVGTGSTANFFIDALARHKAEFDGAVASSEATAKRLKEHGIPVYELNTVSELEFYVDGADESNERLELIKGGGAALTREKIVAAVAKTFICIADASKLVPILGQFPLPVEVIPMARSHVARQLVKLGGDPVYREGVLTDNGNIILDVHNLRIDSPVELEEKINAIVGVVTNGLFAARPADLLLLGTADGVKTLKA.

Substrate contacts are provided by residues 32–35 (TGST), 85–88 (DGAD), and 98–101 (KGGG). Glu-107 acts as the Proton acceptor in catalysis. Lys-125 is a substrate binding site.

Belongs to the ribose 5-phosphate isomerase family. As to quaternary structure, homodimer.

It carries out the reaction aldehydo-D-ribose 5-phosphate = D-ribulose 5-phosphate. Its pathway is carbohydrate degradation; pentose phosphate pathway; D-ribose 5-phosphate from D-ribulose 5-phosphate (non-oxidative stage): step 1/1. In terms of biological role, catalyzes the reversible conversion of ribose-5-phosphate to ribulose 5-phosphate. The protein is Ribose-5-phosphate isomerase A of Pseudomonas aeruginosa (strain LESB58).